A 393-amino-acid chain; its full sequence is RNA pseudouridine synthase 7 (393 aa).

The S4 RNA-binding domain maps to 49 to 118 (KTIVDLFTDE…GDITILQNEA (70 aa)). Residue D162 is part of the active site.

Belongs to the pseudouridine synthase RluA family.

The enzyme catalyses a uridine in RNA = a pseudouridine in RNA. The chain is RNA pseudouridine synthase 7 from Oryza sativa subsp. japonica (Rice).